Here is a 482-residue protein sequence, read N- to C-terminus: Probable glycine dehydrogenase (decarboxylating) subunit 2 (482 aa).

An N6-(pyridoxal phosphate)lysine modification is found at K264.

This sequence belongs to the GcvP family. C-terminal subunit subfamily. As to quaternary structure, the glycine cleavage system is composed of four proteins: P, T, L and H. In this organism, the P 'protein' is a heterodimer of two subunits. The cofactor is pyridoxal 5'-phosphate.

The catalysed reaction is N(6)-[(R)-lipoyl]-L-lysyl-[glycine-cleavage complex H protein] + glycine + H(+) = N(6)-[(R)-S(8)-aminomethyldihydrolipoyl]-L-lysyl-[glycine-cleavage complex H protein] + CO2. In terms of biological role, the glycine cleavage system catalyzes the degradation of glycine. The P protein binds the alpha-amino group of glycine through its pyridoxal phosphate cofactor; CO(2) is released and the remaining methylamine moiety is then transferred to the lipoamide cofactor of the H protein. The polypeptide is Probable glycine dehydrogenase (decarboxylating) subunit 2 (Treponema denticola (strain ATCC 35405 / DSM 14222 / CIP 103919 / JCM 8153 / KCTC 15104)).